A 310-amino-acid chain; its full sequence is UDP-N-acetylenolpyruvoylglucosamine reductase (310 aa).

Residues 27-192 (KIGGKARYIV…LKATFRLQYA (166 aa)) enclose the FAD-binding PCMH-type domain. Arg-171 is an active-site residue. The Proton donor role is filled by Ser-223. Residue Glu-293 is part of the active site.

Belongs to the MurB family. Requires FAD as cofactor.

The protein resides in the cytoplasm. The enzyme catalyses UDP-N-acetyl-alpha-D-muramate + NADP(+) = UDP-N-acetyl-3-O-(1-carboxyvinyl)-alpha-D-glucosamine + NADPH + H(+). Its pathway is cell wall biogenesis; peptidoglycan biosynthesis. In terms of biological role, cell wall formation. This Caldicellulosiruptor saccharolyticus (strain ATCC 43494 / DSM 8903 / Tp8T 6331) protein is UDP-N-acetylenolpyruvoylglucosamine reductase.